The sequence spans 119 residues: Holo-[acyl-carrier-protein] synthase (119 aa).

Mg(2+) contacts are provided by D5 and E51.

This sequence belongs to the P-Pant transferase superfamily. AcpS family. It depends on Mg(2+) as a cofactor.

It localises to the cytoplasm. It carries out the reaction apo-[ACP] + CoA = holo-[ACP] + adenosine 3',5'-bisphosphate + H(+). In terms of biological role, transfers the 4'-phosphopantetheine moiety from coenzyme A to a Ser of acyl-carrier-protein. The protein is Holo-[acyl-carrier-protein] synthase of Helicobacter pylori (strain ATCC 700392 / 26695) (Campylobacter pylori).